Here is a 412-residue protein sequence, read N- to C-terminus: MSFEEVYEELKALVDEQNPSDVLQFCYDFFGEKLKAERSVFRRGDTITESFSDGDESDFLSELNDMVAGPEAIGPDAKYVPELGGLKEMNVSYPQNYNLLRRQSVSTESMNPSAFALETKRTFPPKDPEDLKRLKRSVAGNFLFKNLDEEHYNEVLNAMTEKRIGEAGVAVIVQGAVGDYFYIVEQGEFDVYKRPELNITPEEVLSSGYGNYITTISPGEYFGELALMYNAPRAASVVSKTPNNVIYALDRTSFRRIVFENAYRQRMLYESLLEEVPILSSLDKYQRQKIADALQTVVYQAGSIVIRQGDIGNQFYLIEDGEAEVVKNGKGVVVTLTKGDYFGELALIHETVRNATVQAKTRLKLATFDKPTFNRLLGNAIDLMRNQPRARMGMDNEYGDQSLHRSPPSTKA.

The tract at residues 1–142 is dimerization and phosphorylation; sequence MSFEEVYEEL…RLKRSVAGNF (142 aa). A Pseudophosphorylation motif motif is present at residues 101-105; it reads RRQSV. Ser104 carries the post-translational modification Phosphoserine. 3',5'-cyclic AMP is bound by residues 143–277, Glu224, Arg233, 278–412, Glu344, and Arg353; these read LFKN…EEVP and ILSS…STKA. The interval 392–412 is disordered; it reads MGMDNEYGDQSLHRSPPSTKA.

It belongs to the cAMP-dependent kinase regulatory chain family. In terms of assembly, tetramer, composed of 2 regulatory (R) and 2 catalytic (C) subunits. In the presence of cAMP it dissociates into 2 active monomeric C subunits and an R dimer.

The polypeptide is cAMP-dependent protein kinase regulatory subunit (cgs1) (Schizosaccharomyces pombe (strain 972 / ATCC 24843) (Fission yeast)).